Here is a 320-residue protein sequence, read N- to C-terminus: Ribosomal RNA small subunit methyltransferase H (320 aa).

S-adenosyl-L-methionine-binding positions include 42-44 (GGH), Asp-62, Phe-86, Asp-108, and Gln-115.

This sequence belongs to the methyltransferase superfamily. RsmH family.

The protein resides in the cytoplasm. It carries out the reaction cytidine(1402) in 16S rRNA + S-adenosyl-L-methionine = N(4)-methylcytidine(1402) in 16S rRNA + S-adenosyl-L-homocysteine + H(+). In terms of biological role, specifically methylates the N4 position of cytidine in position 1402 (C1402) of 16S rRNA. This chain is Ribosomal RNA small subunit methyltransferase H, found in Yersinia enterocolitica serotype O:8 / biotype 1B (strain NCTC 13174 / 8081).